We begin with the raw amino-acid sequence, 274 residues long: Thymidylate synthase (274 aa).

Position 21 (Arg-21) interacts with dUMP. Residue His-51 coordinates (6R)-5,10-methylene-5,6,7,8-tetrahydrofolate. DUMP is bound at residue 123–124 (RR). Cys-156 acts as the Nucleophile in catalysis. Residues 176-179 (RSAD), Asn-187, and 217-219 (HIY) contribute to the dUMP site. Position 179 (Asp-179) interacts with (6R)-5,10-methylene-5,6,7,8-tetrahydrofolate. Ser-273 is a (6R)-5,10-methylene-5,6,7,8-tetrahydrofolate binding site.

It belongs to the thymidylate synthase family. Bacterial-type ThyA subfamily. Homodimer.

The protein resides in the cytoplasm. It carries out the reaction dUMP + (6R)-5,10-methylene-5,6,7,8-tetrahydrofolate = 7,8-dihydrofolate + dTMP. Its pathway is pyrimidine metabolism; dTTP biosynthesis. Functionally, catalyzes the reductive methylation of 2'-deoxyuridine-5'-monophosphate (dUMP) to 2'-deoxythymidine-5'-monophosphate (dTMP) while utilizing 5,10-methylenetetrahydrofolate (mTHF) as the methyl donor and reductant in the reaction, yielding dihydrofolate (DHF) as a by-product. This enzymatic reaction provides an intracellular de novo source of dTMP, an essential precursor for DNA biosynthesis. The chain is Thymidylate synthase from Francisella tularensis subsp. tularensis (strain SCHU S4 / Schu 4).